The following is a 727-amino-acid chain: Protein EXECUTER 1, chloroplastic (727 aa).

Disordered stretches follow at residues 1–51 (MAAA…SRLF), 65–102 (LAGAAPAPAPRRRVSSVVRCGGGGGGVRSPDDADAGSG), 340–381 (ISSS…LPSD), and 413–455 (DEDD…SGDE). The transit peptide at 1–83 (MAAAVSTAPR…PRRRVSSVVR (83 aa)) directs the protein to the chloroplast. 2 stretches are compositionally biased toward low complexity: residues 19-33 (SSSCCSSSSSSASMS) and 42-51 (PSSGSGSRLF). A compositionally biased stretch (acidic residues) spans 413–441 (DEDDENDNPEDEIESSEDIGDGDNVEEAE).

Its subcellular location is the plastid. It localises to the chloroplast. Functionally, together with EX2, enables higher plants to perceive singlet oxygen as a stress signal in plastid that activates a genetically determined nuclear stress response program which triggers a programmed cell death (PCD). This transfer of singlet oxygen-induced stress-related signals from the plastid to the nucleus that triggers genetically controlled PCD pathway is unique to photosynthetic eukaryotes and operates under mild stress conditions, impeding photosystem II (PSII) without causing photooxidative damage of the plant. The polypeptide is Protein EXECUTER 1, chloroplastic (Oryza sativa subsp. japonica (Rice)).